A 40-amino-acid polypeptide reads, in one-letter code: AQCGAQGGGATCPGGLCCSQWGWCGSTPKYCGAGCQSNCR.

Residues 1 to 40 (AQCGAQGGGATCPGGLCCSQWGWCGSTPKYCGAGCQSNCR) form the Chitin-binding type-1 domain. 4 cysteine pairs are disulfide-bonded: Cys3–Cys18, Cys12–Cys24, Cys17–Cys31, and Cys35–Cys39.

Post-translationally, not glycosylated.

Its function is as follows. Antimicrobial peptide active against plant pathogenic fungi and Gram-negative and -positive bacteria. The protein is Antimicrobial peptide 2 of Fagopyrum esculentum (Common buckwheat).